The sequence spans 100 residues: Large ribosomal subunit protein uL23 (100 aa).

It belongs to the universal ribosomal protein uL23 family. In terms of assembly, part of the 50S ribosomal subunit. Contacts protein L29, and trigger factor when it is bound to the ribosome.

Its function is as follows. One of the early assembly proteins it binds 23S rRNA. One of the proteins that surrounds the polypeptide exit tunnel on the outside of the ribosome. Forms the main docking site for trigger factor binding to the ribosome. The polypeptide is Large ribosomal subunit protein uL23 (Shewanella piezotolerans (strain WP3 / JCM 13877)).